The chain runs to 129 residues: Small ribosomal subunit protein uS12 (129 aa).

Asp-89 is modified (3-methylthioaspartic acid).

This sequence belongs to the universal ribosomal protein uS12 family. Part of the 30S ribosomal subunit. Contacts proteins S8 and S17. May interact with IF1 in the 30S initiation complex.

Its function is as follows. With S4 and S5 plays an important role in translational accuracy. Functionally, interacts with and stabilizes bases of the 16S rRNA that are involved in tRNA selection in the A site and with the mRNA backbone. Located at the interface of the 30S and 50S subunits, it traverses the body of the 30S subunit contacting proteins on the other side and probably holding the rRNA structure together. The combined cluster of proteins S8, S12 and S17 appears to hold together the shoulder and platform of the 30S subunit. The chain is Small ribosomal subunit protein uS12 from Rickettsia akari (strain Hartford).